The chain runs to 254 residues: Nickel import ATP-binding protein NikD (254 aa).

The ABC transporter domain occupies 2–241 (PQQIELRDIA…PKHAVTRSLV (240 aa)). 36–43 (GGSGSGKS) contributes to the ATP binding site.

This sequence belongs to the ABC transporter superfamily. Nickel importer (TC 3.A.1.5.3) family. As to quaternary structure, the complex is composed of two ATP-binding proteins (NikD and NikE), two transmembrane proteins (NikB and NikC) and a solute-binding protein (NikA).

Its subcellular location is the cell inner membrane. It catalyses the reaction Ni(2+)(out) + ATP + H2O = Ni(2+)(in) + ADP + phosphate + H(+). Functionally, part of the ABC transporter complex NikABCDE involved in nickel import. Responsible for energy coupling to the transport system. The polypeptide is Nickel import ATP-binding protein NikD (Shigella dysenteriae serotype 1 (strain Sd197)).